A 515-amino-acid chain; its full sequence is Nuclear hormone receptor family member nhr-62 (515 aa).

The nuclear receptor DNA-binding region spans 95–170; sequence NLVCVVCGDQ…AGMNPRAVQS (76 aa). 2 NR C4-type zinc fingers span residues 98-118 and 134-153; these read CVVCGDQAFGKHYGVNACNGC and CRFEGRCAIAKEHRNVCRAC. The tract at residues 169 to 195 is disordered; that stretch reads QSERVEREQNGSPNQIEEDDYKDLSSP. Residues 225-509 enclose the NR LBD domain; it reads EMAKLSEQIV…YLCHEVQFIQ (285 aa). The segment at 498–509 is AF-2; the sequence is SEYLCHEVQFIQ.

The protein belongs to the nuclear hormone receptor family. In terms of tissue distribution, widely expressed at a low level in many tissues including the pharynx, sensory neurons, intestine, spermatheca, hypodermis, and excretory cell.

The protein localises to the nucleus. Orphan nuclear hormone receptor. Required for metabolic and physiologic responses associated with dietary-restriction-induced longevity. Modulates triglyceride and lipid metabolism and autophagy, associated with dietary-restriction, probably acting via regulation of transcription of target genes. The chain is Nuclear hormone receptor family member nhr-62 (nhr-62) from Caenorhabditis elegans.